Here is a 533-residue protein sequence, read N- to C-terminus: Pre-mRNA-splicing factor cwf24 (533 aa).

Positions 1 to 17 (MEQKNLNINQASGSKIN) are enriched in polar residues. The segment at 1 to 69 (MEQKNLNINQ…MRDNIPIVSG (69 aa)) is disordered. Positions 27–43 (SRRRHRPRQGLKRKKGF) are enriched in basic residues. The C3H1-type zinc-finger motif lies at 184–212 (DYQPDVCKDYKLTGYCGYGDTCKFLHMRE). Residues 254–292 (CLICKKDYRSPIATTCGHHFCEQCAITRYRKTPTCIQCG) form an RING-type zinc finger. Positions 379–524 (YFIREITESN…SAFYMVCPLS (146 aa)) constitute an N-acetyltransferase domain.

It belongs to the CWC24 family. Belongs to the 40S cdc5-associated complex (or cwf complex), a spliceosome sub-complex reminiscent of a late-stage spliceosome composed of the U2, U5 and U6 snRNAs and at least brr2, cdc5, cwf2/prp3, cwf3/syf1, cwf4/syf3, cwf5/ecm2, spp42/cwf6, cwf7/spf27, cwf8, cwf9, cwf10, cwf11, cwf12, prp45/cwf13, cwf14, cwf15, cwf16, cwf17, cwf18, cwf19, cwf20, cwf21, cwf22, cwf23, cwf24, cwf25, cwf26, cyp7/cwf27, cwf28, cwf29/ist3, lea1, msl1, prp5/cwf1, prp10, prp12/sap130, prp17, prp22, sap61, sap62, sap114, sap145, slu7, smb1, smd1, smd3, smf1, smg1 and syf2.

It localises to the nucleus. Involved in mRNA splicing. The polypeptide is Pre-mRNA-splicing factor cwf24 (cwf24) (Schizosaccharomyces pombe (strain 972 / ATCC 24843) (Fission yeast)).